The following is a 151-amino-acid chain: MKSNRDSYWMKIALKYAYYAEENGEVPIGAILVFQEKIIGTGWNSVISQNDSTAHAEIIALREAGRNIKNYRLVNTTLYVTLQPCMMCCGAIINSRIKRLVFGASYKDLKKNPFLKKIFINLEKNKLKIKKHIMRNECAKILSNFFKNKRF.

Positions 4–122 (NRDSYWMKIA…PFLKKIFINL (119 aa)) constitute a CMP/dCMP-type deaminase domain. His-55 lines the Zn(2+) pocket. Residue Glu-57 is the Proton donor of the active site. Positions 85 and 88 each coordinate Zn(2+).

It belongs to the cytidine and deoxycytidylate deaminase family. As to quaternary structure, homodimer. Requires Zn(2+) as cofactor.

The enzyme catalyses adenosine(34) in tRNA + H2O + H(+) = inosine(34) in tRNA + NH4(+). Its function is as follows. Catalyzes the deamination of adenosine to inosine at the wobble position 34 of tRNA(Arg2). The chain is tRNA-specific adenosine deaminase from Buchnera aphidicola subsp. Schizaphis graminum (strain Sg).